We begin with the raw amino-acid sequence, 608 residues long: Serine/threonine-protein kinase SSN3 (608 aa).

Positions 1–72 (MSYSSASFRK…PGTVGTRTSI (72 aa)) are disordered. The segment covering 17–47 (SQPSQTTTTTTSANQPQSQSQQQPLQQSQQQ) has biased composition (low complexity). Residues 49 to 59 (LHMKPNPHIPH) show a composition bias toward basic residues. In terms of domain architecture, Protein kinase spans 104–492 (YQIMGYIAAG…ADQALLHPYF (389 aa)). ATP contacts are provided by residues 110–118 (IAAGTYGKV) and lysine 182. The active-site Proton acceptor is the aspartate 307. Positions 523–608 (MTTAANNNNN…LPGGIRKKRG (86 aa)) are disordered. The segment covering 528-583 (NNNNNNNNNNNNNNNNNNNNNNNNNNNSGHQLSQQQNVQIQQVHQMQQQIHSQQLQ) has biased composition (low complexity).

The protein belongs to the protein kinase superfamily. CMGC Ser/Thr protein kinase family. CDC2/CDKX subfamily. As to quaternary structure, component of the SRB8-11 complex, a regulatory module of the Mediator complex. It depends on Mg(2+) as a cofactor.

The protein resides in the nucleus. The enzyme catalyses L-seryl-[protein] + ATP = O-phospho-L-seryl-[protein] + ADP + H(+). It catalyses the reaction L-threonyl-[protein] + ATP = O-phospho-L-threonyl-[protein] + ADP + H(+). It carries out the reaction [DNA-directed RNA polymerase] + ATP = phospho-[DNA-directed RNA polymerase] + ADP + H(+). Its function is as follows. Component of the SRB8-11 complex. The SRB8-11 complex is a regulatory module of the Mediator complex which is itself involved in regulation of basal and activated RNA polymerase II-dependent transcription. The SRB8-11 complex may be involved in the transcriptional repression of a subset of genes regulated by Mediator. It may inhibit the association of the Mediator complex with RNA polymerase II to form the holoenzyme complex. The SRB8-11 complex phosphorylates the C-terminal domain (CTD) of the largest subunit of RNA polymerase II. This chain is Serine/threonine-protein kinase SSN3 (SSN3), found in Candida albicans (strain SC5314 / ATCC MYA-2876) (Yeast).